The primary structure comprises 395 residues: Type III polyketide synthase A (395 aa).

63–70 (KLEHLCKT) contacts CoA. Catalysis depends on C172, which acts as the Nucleophile. Position 224–225 (224–225 (GD)) interacts with substrate. CoA contacts are provided by residues L274, 314 to 317 (GGPA), and A317.

Belongs to the thiolase-like superfamily. Chalcone/stilbene synthases family. In terms of assembly, homodimer. Interacts with 4CLL1/ACOS5 and TKPR1. As to expression, expressed in flowers and flower buds (at protein level), and, at very low levels, in roots, seedlings, leaves and stems. Mostly confined to anther tapetal cells.

It localises to the endoplasmic reticulum. It participates in secondary metabolite biosynthesis; flavonoid biosynthesis. Its function is as follows. Plant type III polyketide synthases (PKSs) that catalyzes the condensation of malonyl-CoA units with various CoA ester starter molecules to generate a diverse array of natural products including long-chain alkyl alpha-pyrones. Accepts up to C(20) chain-length fatty acyl CoAs as starter substrates, and carries out sequential condensations with malonyl-CoA to produce triketide and tetraketide alpha-pyrones, potential sporopollenin precursors. Favorite substrates for are midchain- and v-hydroxylated fatty acyl-CoAs (e.g. 12-hydroxyoctadecanoyl-CoA and 16-hydroxyhexadecanoyl-CoA). Required for pollen development and sporopollenin biosynthesis, the major constituent of exine in the outer pollen wall. In vitro, can use 4-coumaroyl-coenzyme A as substrate to produce bis-noryangonin and fatty acyl-coenzyme A as substrate to produce medium-chain alkyl pyrones. May play a role in both the synthesis of pollen fatty acids and phenolics found in exine. This chain is Type III polyketide synthase A, found in Arabidopsis thaliana (Mouse-ear cress).